Reading from the N-terminus, the 240-residue chain is 2,3,4,5-tetrahydropyridine-2,6-dicarboxylate N-acetyltransferase (240 aa).

This sequence belongs to the transferase hexapeptide repeat family. DapH subfamily.

It catalyses the reaction (S)-2,3,4,5-tetrahydrodipicolinate + acetyl-CoA + H2O = L-2-acetamido-6-oxoheptanedioate + CoA. The protein operates within amino-acid biosynthesis; L-lysine biosynthesis via DAP pathway; LL-2,6-diaminopimelate from (S)-tetrahydrodipicolinate (acetylase route): step 1/3. Functionally, catalyzes the transfer of an acetyl group from acetyl-CoA to tetrahydrodipicolinate. The chain is 2,3,4,5-tetrahydropyridine-2,6-dicarboxylate N-acetyltransferase from Bacillus mycoides (strain KBAB4) (Bacillus weihenstephanensis).